A 78-amino-acid chain; its full sequence is DNA-directed RNA polymerase subunit Rpo5 (78 aa).

Belongs to the archaeal Rpo5/eukaryotic RPB5 RNA polymerase subunit family. Part of the RNA polymerase complex.

The protein resides in the cytoplasm. It catalyses the reaction RNA(n) + a ribonucleoside 5'-triphosphate = RNA(n+1) + diphosphate. Its function is as follows. DNA-dependent RNA polymerase (RNAP) catalyzes the transcription of DNA into RNA using the four ribonucleoside triphosphates as substrates. This Methanosarcina barkeri (strain Fusaro / DSM 804) protein is DNA-directed RNA polymerase subunit Rpo5.